Here is a 208-residue protein sequence, read N- to C-terminus: Cytochrome c biogenesis ATP-binding export protein CcmA (208 aa).

In terms of domain architecture, ABC transporter spans 3–206 (LSGKDLTAYR…LEKFLPPQEK (204 aa)). 35–42 (GPNGIGKS) lines the ATP pocket.

This sequence belongs to the ABC transporter superfamily. CcmA exporter (TC 3.A.1.107) family. The complex is composed of two ATP-binding proteins (CcmA) and two transmembrane proteins (CcmB).

Its subcellular location is the cell inner membrane. It carries out the reaction heme b(in) + ATP + H2O = heme b(out) + ADP + phosphate + H(+). Its function is as follows. Part of the ABC transporter complex CcmAB involved in the biogenesis of c-type cytochromes; once thought to export heme, this seems not to be the case, but its exact role is uncertain. Responsible for energy coupling to the transport system. In Bartonella henselae (strain ATCC 49882 / DSM 28221 / CCUG 30454 / Houston 1) (Rochalimaea henselae), this protein is Cytochrome c biogenesis ATP-binding export protein CcmA.